The primary structure comprises 249 residues: Purine nucleoside phosphorylase ML0918 (249 aa).

Zn(2+) contacts are provided by H72, C109, and H126.

The protein belongs to the purine nucleoside phosphorylase YfiH/LACC1 family. As to quaternary structure, homodimer. Requires Cu(2+) as cofactor. Zn(2+) serves as cofactor.

The enzyme catalyses adenosine + phosphate = alpha-D-ribose 1-phosphate + adenine. It catalyses the reaction S-methyl-5'-thioadenosine + phosphate = 5-(methylsulfanyl)-alpha-D-ribose 1-phosphate + adenine. The catalysed reaction is inosine + phosphate = alpha-D-ribose 1-phosphate + hypoxanthine. It carries out the reaction adenosine + H2O + H(+) = inosine + NH4(+). Its function is as follows. Purine nucleoside enzyme that catalyzes the phosphorolysis of adenosine and inosine nucleosides, yielding D-ribose 1-phosphate and the respective free bases, adenine and hypoxanthine. Also catalyzes the phosphorolysis of S-methyl-5'-thioadenosine into adenine and S-methyl-5-thio-alpha-D-ribose 1-phosphate. Also has adenosine deaminase activity. The sequence is that of Purine nucleoside phosphorylase ML0918 from Mycobacterium leprae (strain TN).